A 93-amino-acid chain; its full sequence is Sec-independent protein translocase protein TatA (93 aa).

A helical transmembrane segment spans residues M1–F21. The segment at D49–K93 is disordered. Positions S60 to S70 are enriched in polar residues. Basic and acidic residues predominate over residues K75 to K93.

Belongs to the TatA/E family. The Tat system comprises two distinct complexes: a TatABC complex, containing multiple copies of TatA, TatB and TatC subunits, and a separate TatA complex, containing only TatA subunits. Substrates initially bind to the TatABC complex, which probably triggers association of the separate TatA complex to form the active translocon.

The protein localises to the cell membrane. Part of the twin-arginine translocation (Tat) system that transports large folded proteins containing a characteristic twin-arginine motif in their signal peptide across membranes. TatA could form the protein-conducting channel of the Tat system. This Tropheryma whipplei (strain TW08/27) (Whipple's bacillus) protein is Sec-independent protein translocase protein TatA.